A 124-amino-acid polypeptide reads, in one-letter code: MNVLAKYNQVRSSAQKIRLIANIIRGKKALLALQILSSVKKKAALLVKKLLKSALSNAEHNYGYNKEVLIISKIFVNSGSSMKRMMPRAKGRADRILKRTSHITVILSDIKKNPEGYNGSKSTP.

Belongs to the universal ribosomal protein uL22 family. As to quaternary structure, part of the 50S ribosomal subunit.

Its function is as follows. This protein binds specifically to 23S rRNA; its binding is stimulated by other ribosomal proteins, e.g. L4, L17, and L20. It is important during the early stages of 50S assembly. It makes multiple contacts with different domains of the 23S rRNA in the assembled 50S subunit and ribosome. Functionally, the globular domain of the protein is located near the polypeptide exit tunnel on the outside of the subunit, while an extended beta-hairpin is found that lines the wall of the exit tunnel in the center of the 70S ribosome. The sequence is that of Large ribosomal subunit protein uL22 from Buchnera aphidicola subsp. Cinara cedri (strain Cc).